We begin with the raw amino-acid sequence, 160 residues long: UPF0225 protein PputW619_1140 (160 aa).

Belongs to the UPF0225 family.

The polypeptide is UPF0225 protein PputW619_1140 (Pseudomonas putida (strain W619)).